Here is a 162-residue protein sequence, read N- to C-terminus: Endoribonuclease YbeY (162 aa).

H117, H121, and H127 together coordinate Zn(2+).

Belongs to the endoribonuclease YbeY family. Zn(2+) is required as a cofactor.

It localises to the cytoplasm. Its function is as follows. Single strand-specific metallo-endoribonuclease involved in late-stage 70S ribosome quality control and in maturation of the 3' terminus of the 16S rRNA. The polypeptide is Endoribonuclease YbeY (Francisella tularensis subsp. tularensis (strain WY96-3418)).